The primary structure comprises 168 residues: MNSSTEGRPTPNLPRTANKRGVARLAAVQALYQMDVAGTGVLEVVAEYEAFRLGKEVDGTQYLDADPQWFRAIVAGVVDEQLKLDPMIHQALTEDWPLSRLDSTLRAILRAGAWELQTRKDVPTAVIVSEYVDIAKAFYTEDEPKLVNAVLDRLAFVIRGESRGVKPR.

It belongs to the NusB family.

In terms of biological role, involved in transcription antitermination. Required for transcription of ribosomal RNA (rRNA) genes. Binds specifically to the boxA antiterminator sequence of the ribosomal RNA (rrn) operons. The protein is Transcription antitermination protein NusB of Brucella anthropi (strain ATCC 49188 / DSM 6882 / CCUG 24695 / JCM 21032 / LMG 3331 / NBRC 15819 / NCTC 12168 / Alc 37) (Ochrobactrum anthropi).